A 706-amino-acid polypeptide reads, in one-letter code: Phenylalanine--tRNA ligase beta subunit, chloroplastic (706 aa).

Positions 300-388 (KVLKPIVLNY…RLHGFNNFLT (89 aa)) constitute a B5 domain. Positions 366, 372, 375, and 376 each coordinate Mg(2+). The region spanning 612-705 (SVYPKIVKDL…LELKVQAILR (94 aa)) is the FDX-ACB domain.

Belongs to the phenylalanyl-tRNA synthetase beta subunit family. Type 1 subfamily. As to quaternary structure, tetramer of two alpha and two beta subunits. Requires Mg(2+) as cofactor.

It is found in the plastid. The protein localises to the chloroplast. It catalyses the reaction tRNA(Phe) + L-phenylalanine + ATP = L-phenylalanyl-tRNA(Phe) + AMP + diphosphate + H(+). In Phaeodactylum tricornutum (strain CCAP 1055/1), this protein is Phenylalanine--tRNA ligase beta subunit, chloroplastic.